The primary structure comprises 42 residues: Photosystem I reaction center subunit IX (42 aa).

Residues 7-27 (YLSTAPVLAAVWFGFLAGLLI) traverse the membrane as a helical segment.

It belongs to the PsaJ family.

It localises to the plastid. It is found in the chloroplast thylakoid membrane. In terms of biological role, may help in the organization of the PsaE and PsaF subunits. The polypeptide is Photosystem I reaction center subunit IX (Nephroselmis olivacea (Green alga)).